The primary structure comprises 308 residues: Aspartate carbamoyltransferase catalytic subunit (308 aa).

Positions 49 and 50 each coordinate carbamoyl phosphate. Lys77 contacts L-aspartate. The carbamoyl phosphate site is built by Arg99, His127, and Gln130. L-aspartate-binding residues include Arg160 and Arg211. Carbamoyl phosphate-binding residues include Ala252 and Pro253.

The protein belongs to the aspartate/ornithine carbamoyltransferase superfamily. ATCase family. Heterododecamer (2C3:3R2) of six catalytic PyrB chains organized as two trimers (C3), and six regulatory PyrI chains organized as three dimers (R2).

It catalyses the reaction carbamoyl phosphate + L-aspartate = N-carbamoyl-L-aspartate + phosphate + H(+). The protein operates within pyrimidine metabolism; UMP biosynthesis via de novo pathway; (S)-dihydroorotate from bicarbonate: step 2/3. Its function is as follows. Catalyzes the condensation of carbamoyl phosphate and aspartate to form carbamoyl aspartate and inorganic phosphate, the committed step in the de novo pyrimidine nucleotide biosynthesis pathway. This is Aspartate carbamoyltransferase catalytic subunit from Geobacillus kaustophilus (strain HTA426).